The primary structure comprises 31 residues: Mu-conotoxin SmIIIA (31 aa).

Residues 1–6 (PLFDKR) constitute a propeptide that is removed on maturation. A Pyrrolidone carboxylic acid modification is found at Gln-7. Intrachain disulfides connect Cys-9-Cys-21, Cys-10-Cys-27, and Cys-16-Cys-28. Position 28 is a cysteine amide (Cys-28).

The protein belongs to the conotoxin M superfamily. SmIIIA' is a putative isoform where the N-terminal AA is missing. As to expression, expressed by the venom duct.

The protein resides in the secreted. In terms of biological role, mu-conotoxins block voltage-gated sodium channels (Nav). This toxin blocks rNav1.5/SCN5A (IC(50) is 1.3 uM), rNav1.6/SCN8A (IC(50) is 160 nM), rNav1.7/SCN9A (IC(50) is 1.3 uM), rNav1.1/SCN1A (K(d) is 3.8 nM), rNav1.2/SCN2A (K(d) is 1.3 nM), rNav1.4/SCN4A (K(d) is 0.22 nM), rNav1.6/SCN8A (K(d) is 69 nM), and rNav1.7/SCN9A (K(d) is 260 nM). This toxin is very potent but weakly discriminating among sodium channels. The block of these channels is modified when beta-subunits are coexpressed with alpha subunits. Hence, blocks of channels containing beta-1 and beta-3 subunits are more potent (compared to channels without beta subunits), whereas blocks of channels containing beta-2 and beta-4 subunits are less potent (compared to channels without beta subunits). This chain is Mu-conotoxin SmIIIA, found in Conus stercusmuscarum (Fly-specked cone).